We begin with the raw amino-acid sequence, 361 residues long: dTDP-glucose 4,6-dehydratase (361 aa).

NAD(+) is bound by residues 11-12, 32-35, 58-59, 80-84, and Thr99; these read FI, DKLT, DI, and LAAES. Ser84 contacts substrate. Residue Thr133 participates in substrate binding. Asp134 serves as the catalytic Proton donor. Catalysis depends on proton acceptor residues Glu135 and Tyr167. 167–171 serves as a coordination point for NAD(+); that stretch reads YSASK. Residue Asn196 participates in substrate binding. Residue Asn197 participates in NAD(+) binding. Substrate contacts are provided by residues 206–207, 222–224, Arg231, Asn266, 296–300, and Tyr357; these read KL, PIY, and DRPGH.

It belongs to the NAD(P)-dependent epimerase/dehydratase family. dTDP-glucose dehydratase subfamily. As to quaternary structure, homodimer. It depends on NAD(+) as a cofactor.

The enzyme catalyses dTDP-alpha-D-glucose = dTDP-4-dehydro-6-deoxy-alpha-D-glucose + H2O. The protein operates within carbohydrate biosynthesis; dTDP-L-rhamnose biosynthesis. It participates in bacterial outer membrane biogenesis; LPS O-antigen biosynthesis. Its function is as follows. Catalyzes the dehydration of dTDP-D-glucose to form dTDP-6-deoxy-D-xylo-4-hexulose via a three-step process involving oxidation, dehydration and reduction. This chain is dTDP-glucose 4,6-dehydratase, found in Salmonella typhimurium (strain LT2 / SGSC1412 / ATCC 700720).